Reading from the N-terminus, the 92-residue chain is MARKCEITGKKTMFGNNVPRKGLAKKKGGARQHIGVKTKRTFKVNLINKKFFIPDLGRSINIKVSANALRSISKIGLDAFLKKNCKKIENFL.

It belongs to the bacterial ribosomal protein bL28 family.

In Borreliella afzelii (strain PKo) (Borrelia afzelii), this protein is Large ribosomal subunit protein bL28.